The chain runs to 161 residues: Phosphopantetheine adenylyltransferase (161 aa).

Position 11 (Ser-11) interacts with substrate. Residues 11–12 and His-19 each bind ATP; that span reads SF. The substrate site is built by Lys-43, Leu-75, and Arg-89. ATP contacts are provided by residues 90–92, Glu-100, and 125–131; these read GLR and YSYLSSS.

It belongs to the bacterial CoaD family. In terms of assembly, homohexamer. Mg(2+) is required as a cofactor.

Its subcellular location is the cytoplasm. The catalysed reaction is (R)-4'-phosphopantetheine + ATP + H(+) = 3'-dephospho-CoA + diphosphate. It functions in the pathway cofactor biosynthesis; coenzyme A biosynthesis; CoA from (R)-pantothenate: step 4/5. Its function is as follows. Reversibly transfers an adenylyl group from ATP to 4'-phosphopantetheine, yielding dephospho-CoA (dPCoA) and pyrophosphate. In Citrifermentans bemidjiense (strain ATCC BAA-1014 / DSM 16622 / JCM 12645 / Bem) (Geobacter bemidjiensis), this protein is Phosphopantetheine adenylyltransferase.